The chain runs to 362 residues: S-adenosylmethionine decarboxylase proenzyme (362 aa).

Residues glutamate 11 and glutamate 14 contribute to the active site. Serine 71 acts as the Schiff-base intermediate with substrate; via pyruvic acid in catalysis. Position 71 is a pyruvic acid (Ser); by autocatalysis (serine 71). Cysteine 85 functions as the Proton donor; for catalytic activity in the catalytic mechanism. Residues serine 234 and histidine 247 each act as proton acceptor; for processing activity in the active site.

This sequence belongs to the eukaryotic AdoMetDC family. The cofactor is pyruvate. Post-translationally, is synthesized initially as an inactive proenzyme. Formation of the active enzyme involves a self-maturation process in which the active site pyruvoyl group is generated from an internal serine residue via an autocatalytic post-translational modification. Two non-identical subunits are generated from the proenzyme in this reaction, and the pyruvate is formed at the N-terminus of the alpha chain, which is derived from the carboxyl end of the proenzyme. The post-translation cleavage follows an unusual pathway, termed non-hydrolytic serinolysis, in which the side chain hydroxyl group of the serine supplies its oxygen atom to form the C-terminus of the beta chain, while the remainder of the serine residue undergoes an oxidative deamination to produce ammonia and the pyruvoyl group blocking the N-terminus of the alpha chain.

The catalysed reaction is S-adenosyl-L-methionine + H(+) = S-adenosyl 3-(methylsulfanyl)propylamine + CO2. It functions in the pathway amine and polyamine biosynthesis; S-adenosylmethioninamine biosynthesis; S-adenosylmethioninamine from S-adenosyl-L-methionine: step 1/1. In Ipomoea batatas (Sweet potato), this protein is S-adenosylmethionine decarboxylase proenzyme (SAMDC).